The primary structure comprises 236 residues: Small ribosomal subunit protein uS3 (236 aa).

One can recognise a KH type-2 domain in the interval 39–107; sequence VREFLKKSLS…PAQISITEIK (69 aa).

Belongs to the universal ribosomal protein uS3 family. Part of the 30S ribosomal subunit. Forms a tight complex with proteins S10 and S14.

Binds the lower part of the 30S subunit head. Binds mRNA in the 70S ribosome, positioning it for translation. The sequence is that of Small ribosomal subunit protein uS3 from Wigglesworthia glossinidia brevipalpis.